The primary structure comprises 204 residues: MRYSSGAVEALIEEFAKLPGIGRKTAQRLTMHVLQERRGEVEKLAAALIDVKEKVVRCSICQNITDLGTDPCLLCTSTGRDRSVICVVESPTEVLAFEKTGHYKGLYHVLHGVISPLDGVGPDDIKVRELLARISPDSEGGVREVVLALNPTVEGETTSLYISKLLKPLGINVTRIARGIPVGAELEFIDEATLSRAMDGRSAV.

The C4-type zinc finger occupies 58–75; that stretch reads CSICQNITDLGTDPCLLC. The Toprim domain occupies 83–181; the sequence is SVICVVESPT…NVTRIARGIP (99 aa).

It belongs to the RecR family.

Its function is as follows. May play a role in DNA repair. It seems to be involved in an RecBC-independent recombinational process of DNA repair. It may act with RecF and RecO. The chain is Recombination protein RecR from Chlorobaculum parvum (strain DSM 263 / NCIMB 8327) (Chlorobium vibrioforme subsp. thiosulfatophilum).